The primary structure comprises 2169 residues: Voltage-dependent L-type calcium channel subunit alpha-1C (2169 aa).

At 1–153 (MVPLVQPTTP…RACISIVEWK (153 aa)) the chain is on the cytoplasmic side. The segment at 76–97 (GAALSWQAAIDAGRQAKLMGSA) is calmodulin-binding. Residues 98 to 108 (GNTTISTVSST) are compositionally biased toward polar residues. Residues 98-127 (GNTTISTVSSTQRKRQQYGKPKKQSGTTAT) are disordered. Residues 109 to 120 (QRKRQQYGKPKK) are compositionally biased toward basic residues. The stretch at 140-437 (NPIRRACISI…LVLGVLSGEF (298 aa)) is one I repeat. The helical transmembrane segment at 154 to 172 (PFEIIILLTIFANCVALAI) threads the bilayer. At 173–187 (YIPFPEDDSNATNSN) the chain is on the extracellular side. Asn-182 carries an N-linked (GlcNAc...) asparagine glycan. The helical transmembrane segment at 188–208 (LERVEYLFLIIFTVEAFLKVI) threads the bilayer. The Cytoplasmic segment spans residues 209–217 (AYGLLFHPN). The chain crosses the membrane as a helical span at residues 218 to 238 (AYLRNGWNLLDFIIVVVGLFS). Topologically, residues 239–261 (AILEQATKADGANALGGKGAGFD) are extracellular. Residues 262–280 (VKALRAFRVLRPLRLVSGV) form a helical membrane-spanning segment. The Cytoplasmic portion of the chain corresponds to 281–297 (PSLQVVLNSIIKAMVPL). A helical membrane pass occupies residues 298–319 (LHTALLVLFVIIIYAIIGLELF). The Extracellular portion of the chain corresponds to 320 to 379 (MGKMHKTCYNQEGITDVPAEEDPSPCALESGHGRQCQNGTVCKPGWDGPKHGITNFDNFA). Cys-345 and Cys-361 form a disulfide bridge. N-linked (GlcNAc...) asparagine glycosylation is present at Asn-357. Positions 380-401 (FAMLTVFQCITMEGWTDVLYWM) form an intramembrane region, pore-forming. The Selectivity filter of repeat I motif lies at 390 to 393 (TMEG). Glu-392 lines the Ca(2+) pocket. The Extracellular segment spans residues 402–409 (QDAMGYEL). A helical transmembrane segment spans residues 410-430 (PWVYFVSLVIFGSFFVLNLVL). Over 431–553 (GVLSGEFSKE…RKCRAAVKSN (123 aa)) the chain is Cytoplasmic. The segment at 457-474 (QQLEEDLKGYLDWITQAE) is AID/alpha-interaction domain; mediates interaction with the beta subunit. Positions 478-510 (PENEDEGVDEEKPRNMSMPTSETESVNTENVAG) are disordered. Over residues 494–507 (SMPTSETESVNTEN) the composition is skewed to polar residues. Ser-498 is subject to Phosphoserine. Thr-505 carries the post-translational modification Phosphothreonine. Residues 539 to 785 (NRFCRRKCRA…VFLAIAVDNL (247 aa)) form an II repeat. Residues 554 to 572 (VFYWLVIFLVFLNTLTIAS) form a helical membrane-spanning segment. Topologically, residues 573–583 (EHYNQPHWLTE) are extracellular. Residues 584-604 (VQDTANKALLALFTAEMLLKM) form a helical membrane-spanning segment. The Cytoplasmic segment spans residues 605 to 615 (YSLGLQAYFVS). Residues 616 to 635 (LFNRLDCFIVCGGILETILV) traverse the membrane as a helical segment. Residues 636–644 (ETKIMSPLG) lie on the Extracellular side of the membrane. A helical membrane pass occupies residues 645–663 (ISVLRCVRLLRIFKITRYW). Residues 664 to 682 (NSLSNLVASLLNSVRSIAS) lie on the Cytoplasmic side of the membrane. A helical membrane pass occupies residues 683–702 (LLLLLFLFIIIFSLLGMQLF). The Extracellular segment spans residues 703-722 (GGKFNFDEMRTRRSTFDNFP). Positions 723 to 744 (QSLLTVFQILTGEDWNSVMYDG) form an intramembrane region, pore-forming. The Selectivity filter of repeat II signature appears at 733–736 (TGED). Glu-735 lines the Ca(2+) pocket. Residues 745–754 (IMAYGGPSFP) are Extracellular-facing. Residues 755 to 774 (GMLVCIYFIILFICGNYILL) form a helical membrane-spanning segment. Residues 775–929 (NVFLAIAVDN…LQCHRIVNDT (155 aa)) are Cytoplasmic-facing. Residues 793-890 (SAQKEEEEEK…EMPVGPRPRP (98 aa)) are disordered. Positions 812–835 (SPEKKQEVVEKPAVEETKEEKIEL) are enriched in basic and acidic residues. A phosphoserine mark is found at Ser-837 and Ser-844. Positions 858–905 (NENEDKSPYPNPDAAGEEDEEEPEMPVGPRPRPLSELHLKEKAVPMPE) are interaction with STAC2. A compositionally biased stretch (acidic residues) spans 872 to 881 (AGEEDEEEPE). An III repeat occupies 916 to 1198 (NRFRLQCHRI…IFVGFVIVTF (283 aa)). The chain crosses the membrane as a helical span at residues 930–948 (IFTNLILFFILLSSISLAA). Over 949 to 960 (EDPVQHTSFRNH) the chain is Extracellular. A helical membrane pass occupies residues 961–980 (ILFYFDIVFTTIFTIEIALK). The Cytoplasmic portion of the chain corresponds to 981 to 996 (MTAYGAFLHKGSFCRN). Residues 997–1015 (YFNILDLLVVSVSLISFGI) traverse the membrane as a helical segment. At 1016 to 1022 (QSSAINV) the chain is on the extracellular side. A helical membrane pass occupies residues 1023-1041 (VKILRVLRVLRPLRAINRA). The Cytoplasmic segment spans residues 1042-1060 (KGLKHVVQCVFVAIRTIGN). The helical transmembrane segment at 1061-1080 (IVIVTTLLQFMFACIGVQLF) threads the bilayer. At 1081–1130 (KGKLYTCSDSSKQTEAECKGNYITYKDGEVDQPIIQPRSWENSKFDFDNV) the chain is on the extracellular side. Cysteines 1087 and 1098 form a disulfide. The tract at residues 1118–1207 (RSWENSKFDF…FQEQGEQEYK (90 aa)) is dihydropyridine binding. The pore-forming intramembrane region spans 1131-1151 (LAAMMALFTVSTFEGWPELLY). The short motif at 1142-1145 (TFEG) is the Selectivity filter of repeat III element. Position 1144 (Glu-1144) interacts with Ca(2+). At 1152–1168 (RSIDSHTEDKGPIYNYR) the chain is on the extracellular side. A helical membrane pass occupies residues 1169–1190 (VEISIFFIIYIIIIAFFMMNIF). Residues 1191-1248 (VGFVIVTFQEQGEQEYKNCELDKNQRQCVEYALKARPLRRYIPKNQHQYKVWYVVNST) lie on the Cytoplasmic side of the membrane. Residues 1235 to 1508 (NQHQYKVWYV…LFVAVVMDNF (274 aa)) form an IV repeat. The helical transmembrane segment at 1249-1270 (YFEYLMFVLILLNTICLAMQHY) threads the bilayer. Topologically, residues 1271–1278 (GQSCLFKI) are extracellular. The chain crosses the membrane as a helical span at residues 1279–1300 (AMNILNMLFTGLFTVEMILKLI). Residues 1301–1310 (AFKPKHYFCD) lie on the Cytoplasmic side of the membrane. A helical membrane pass occupies residues 1311 to 1330 (AWNTFDALIVVGSIVDIAIT). The Extracellular segment spans residues 1331–1353 (EVNPAEHTQCSPSMNAEENSRIS). Residues 1354-1372 (ITFFRLFRVMRLVKLLSRG) form a helical membrane-spanning segment. The Cytoplasmic portion of the chain corresponds to 1373–1390 (EGIRTLLWTFIKSFQALP). The chain crosses the membrane as a helical span at residues 1391–1411 (YVALLIVMLFFIYAVIGMQVF). The Extracellular segment spans residues 1412–1433 (GKIALNDTTEINRNNNFQTFPQ). An N-linked (GlcNAc...) asparagine glycan is attached at Asn-1417. The segment at residues 1434 to 1452 (AVLLLFRCATGEAWQDIML) is an intramembrane region (pore-forming). The Selectivity filter of repeat IV signature appears at 1443-1446 (TGEA). At 1453-1480 (ACMPGKKCAPESDPSNSTEGETPCGSSF) the chain is on the extracellular side. The interval 1459 to 1527 (KCAPESDPSN…LGPHHLDEFK (69 aa)) is dihydropyridine binding. A disulfide bridge links Cys-1460 with Cys-1476. A glycan (N-linked (GlcNAc...) asparagine) is linked at Asn-1468. The interval 1473–1515 (ETPCGSSFAVFYFISFYMLCAFLIINLFVAVVMDNFDYLTRDW) is phenylalkylamine binding. Residues 1481–1505 (AVFYFISFYMLCAFLIINLFVAVVM) form a helical membrane-spanning segment. The Cytoplasmic segment spans residues 1506–2169 (DNFDYLTRDW…ADSRVHVRSL (664 aa)). An important for interaction with STAC1, STAC2 and STAC3 region spans residues 1640–1667 (DEVTVGKFYATFLIQEYFRKFKKRKEQG). Positions 1646–1666 (KFYATFLIQEYFRKFKKRKEQ) are calmodulin-binding IQ region. The tract at residues 1680–1699 (LQAGLRTLHDIGPEIRRAIS) is important for localization in at the junctional membrane. Residues Ser-1699 and Ser-1720 each carry the phosphoserine modification. 2 disordered regions span residues 1761–1793 (KAGN…TGSN) and 1894–1920 (ENRQ…LRSA). Residues 1780-1792 (STFTPSSYSSTGS) show a composition bias toward polar residues. Residues 1894 to 1910 (ENRQLTPPEEDKGDTRP) are compositionally biased toward basic and acidic residues. Ser-1927 bears the Phosphoserine mark.

Belongs to the calcium channel alpha-1 subunit (TC 1.A.1.11) family. CACNA1C subfamily. In terms of assembly, component of a calcium channel complex consisting of a pore-forming alpha subunit (CACNA1C) and ancillary beta, gamma and delta subunits. The channel complex contains alpha, beta, gamma and delta subunits in a 1:1:1:1 ratio, i.e. it contains only one of each type of subunit. CACNA1C channel activity is modulated by ancillary subunits, such as CACNB1, CACNB2, CACNB3, CACNA2D1 and CACNA2D4. Interacts with CACNB1. Interacts with CACNB2. Identified in a complex with CACNA2D4 and CACNB3. Interacts with CACNB3. Interacts with CACNA2D1. Interacts with CACNA2D4. Interacts with the gamma subunits CACNG4, CACNG6, CACNG7 and CACNG8. Interacts with CALM1. Interacts (via the N-terminus and the C-terminal C and IQ motifs) with CABP1; this inhibits Ca(2+)-dependent channel inactivation. The binding via the C motif is calcium independent whereas the binding via IQ requires the presence of calcium and is mutually exclusive with calmodulin binding. The binding to the cytoplasmic N-terminal domain is calcium independent but is essential for the channel modulation. Interacts (via C-terminal CDB motif) with CABP5; in a calcium-dependent manner. Interacts with CIB1; the interaction increases upon cardiomyocytes hypertrophy. Interacts with STAC2 and STAC3; this inhibits channel inactivation. Post-translationally, phosphorylation by PKA at Ser-1927 activates the channel. Elevated levels of blood glucose lead to increased phosphorylation by PKA. In terms of tissue distribution, expressed in heart. Expressed in uterus.

Its subcellular location is the cell membrane. It localises to the sarcolemma. The protein resides in the perikaryon. It is found in the postsynaptic density membrane. The protein localises to the cell projection. Its subcellular location is the dendrite. It localises to the T-tubule. It catalyses the reaction Ca(2+)(in) = Ca(2+)(out). Its activity is regulated as follows. Inhibited by dihydropyridines (DHP), such as isradipine. Inhibited by nifedipine. Channel activity is regulated by Ca(2+) and calmodulin. Binding of STAC1, STAC2 or STAC3 to a region that overlaps with the calmodulin binding site inhibits channel inactivation by Ca(2+) and calmodulin. Binding of calmodulin or CABP1 at the same regulatory sites results in opposite effects on the channel function. Shear stress and pressure increases calcium channel activity. Pore-forming, alpha-1C subunit of the voltage-gated calcium channel that gives rise to L-type calcium currents. Mediates influx of calcium ions into the cytoplasm, and thereby triggers calcium release from the sarcoplasm. Plays an important role in excitation-contraction coupling in the heart. Required for normal heart development and normal regulation of heart rhythm. Required for normal contraction of smooth muscle cells in blood vessels and in the intestine. Essential for normal blood pressure regulation via its role in the contraction of arterial smooth muscle cells. Long-lasting (L-type) calcium channels belong to the 'high-voltage activated' (HVA) group. The sequence is that of Voltage-dependent L-type calcium channel subunit alpha-1C (CACNA1C) from Cavia porcellus (Guinea pig).